We begin with the raw amino-acid sequence, 315 residues long: Thioredoxin reductase (315 aa).

Position 45-52 (45-52) interacts with FAD; it reads EGSTPGGK. An intrachain disulfide couples Cys-145 to Cys-148. 288-297 is a binding site for FAD; the sequence is DCRSKHFRQI.

Belongs to the class-II pyridine nucleotide-disulfide oxidoreductase family. As to quaternary structure, homodimer. FAD serves as cofactor.

The protein localises to the cytoplasm. It catalyses the reaction [thioredoxin]-dithiol + NADP(+) = [thioredoxin]-disulfide + NADPH + H(+). The protein is Thioredoxin reductase (trxB) of Mycoplasma pneumoniae (strain ATCC 29342 / M129 / Subtype 1) (Mycoplasmoides pneumoniae).